The sequence spans 340 residues: MNNWIHTSLDNSDIVLSSRIRLARNLSNFTYPHKISIEEGRKIVETIEKVLQNEESKYKVYRLWEMDPLDRVTYLEKYLISSKLILNNEKGAFITNEDETVSLMINEEDHIRLQCITNGFNLEEAYKCAEDLDDLIEENLDYAFDENLGYMTACPTNLGTGLRASVMIHLPTLTMNREINKIFSGLTQIGMTIRGIYGEGSKVVGNLFQVSNQLTLGLSEEEVINNLKAVVYQIINQEKLAREKIMKMHKYRIEDKVYRALGILNSAVLLDSEECLKLLSYVRLGVEMDIIKDVSKKVLNELTISIQPAMIQRIFNSKLTEEARQLKRAELVKRKLKNSI.

The Phosphagen kinase C-terminal domain occupies 14–241 (IVLSSRIRLA…YQIINQEKLA (228 aa)). ATP contacts are provided by residues 17 to 21 (SSRIR), R112, 163 to 167 (RASVM), and 194 to 199 (RGIYGE).

Belongs to the ATP:guanido phosphotransferase family.

It carries out the reaction L-arginyl-[protein] + ATP = N(omega)-phospho-L-arginyl-[protein] + ADP + H(+). In terms of biological role, catalyzes the specific phosphorylation of arginine residues in proteins. The sequence is that of Protein-arginine kinase from Clostridium tetani (strain Massachusetts / E88).